Reading from the N-terminus, the 286-residue chain is Energy-coupling factor transporter ATP-binding protein EcfA2 (286 aa).

The region spanning 3-246 is the ABC transporter domain; that stretch reads IQFNQVSYIY…KTQLLKWHIE (244 aa). 40–47 contributes to the ATP binding site; it reads GQTGSGKS.

It belongs to the ABC transporter superfamily. Energy-coupling factor EcfA family. As to quaternary structure, forms a stable energy-coupling factor (ECF) transporter complex composed of 2 membrane-embedded substrate-binding proteins (S component), 2 ATP-binding proteins (A component) and 2 transmembrane proteins (T component).

It is found in the cell membrane. Functionally, ATP-binding (A) component of a common energy-coupling factor (ECF) ABC-transporter complex. Unlike classic ABC transporters this ECF transporter provides the energy necessary to transport a number of different substrates. The polypeptide is Energy-coupling factor transporter ATP-binding protein EcfA2 (Staphylococcus epidermidis (strain ATCC 35984 / DSM 28319 / BCRC 17069 / CCUG 31568 / BM 3577 / RP62A)).